The chain runs to 227 residues: DNA repair protein RecO (227 aa).

It belongs to the RecO family.

Involved in DNA repair and RecF pathway recombination. This chain is DNA repair protein RecO, found in Pseudomonas putida (strain ATCC 47054 / DSM 6125 / CFBP 8728 / NCIMB 11950 / KT2440).